A 299-amino-acid chain; its full sequence is AT-hook motif nuclear-localized protein 25 (299 aa).

Disordered stretches follow at residues 1–87 (MSSY…RDSP) and 216–251 (EEET…CESN). Composition is skewed to basic and acidic residues over residues 14 to 23 (HLQRPEDSRT) and 33 to 42 (NRSEADEAKA). 2 stretches are compositionally biased toward low complexity: residues 44–72 (TTPT…PAGS) and 224–239 (TTGV…QSSE). Positions 63 to 75 (RRPRGRPAGSKNK) form a DNA-binding region, a.T hook. The PPC domain occupies 87-233 (PNVLRSHVLE…TTGVQQQQPE (147 aa)). The segment covering 240-251 (VTGSGAQACESN) has biased composition (polar residues).

Homodimer. Interacts with AHL27 and AHL29. Expressed in seedlings, leaves, stems, floral tips and flowers.

It localises to the nucleus. Functionally, transcription factor that specifically binds AT-rich DNA sequences related to the nuclear matrix attachment regions (MARs). Binds the DNA sequence GNFEI (GA-negative feedback element I) in the GA3OX1 promoter. Binding to GNFEI sequence is required for GA-negative feedback regulation of GA3OX1. The chain is AT-hook motif nuclear-localized protein 25 from Arabidopsis thaliana (Mouse-ear cress).